Reading from the N-terminus, the 186-residue chain is Ion-translocating oxidoreductase complex subunit B (186 aa).

The tract at residues 1–23 (MLTPILALTALALIAGALLGFAA) is hydrophobic. Residues 29 to 88 (EGNPIADQVDAVLPQTQCGQCGFGGCRPYAEAIAAGEAEINRCPPGGQDTVQTLADLLGV) form the 4Fe-4S domain. [4Fe-4S] cluster-binding residues include C46, C49, C54, C71, C114, C117, C120, C124, C144, C147, C150, and C154. 2 consecutive 4Fe-4S ferredoxin-type domains span residues 105 to 134 (QVAW…GAAK) and 135 to 164 (QMHT…MVPV).

It belongs to the 4Fe4S bacterial-type ferredoxin family. RnfB subfamily. As to quaternary structure, the complex is composed of six subunits: RnfA, RnfB, RnfC, RnfD, RnfE and RnfG. Requires [4Fe-4S] cluster as cofactor.

It localises to the cell inner membrane. In terms of biological role, part of a membrane-bound complex that couples electron transfer with translocation of ions across the membrane. The sequence is that of Ion-translocating oxidoreductase complex subunit B from Alkalilimnicola ehrlichii (strain ATCC BAA-1101 / DSM 17681 / MLHE-1).